A 229-amino-acid polypeptide reads, in one-letter code: Large ribosomal subunit protein uL1 (229 aa).

Belongs to the universal ribosomal protein uL1 family. As to quaternary structure, part of the 50S ribosomal subunit.

Its function is as follows. Binds directly to 23S rRNA. The L1 stalk is quite mobile in the ribosome, and is involved in E site tRNA release. Protein L1 is also a translational repressor protein, it controls the translation of the L11 operon by binding to its mRNA. The polypeptide is Large ribosomal subunit protein uL1 (Streptococcus pneumoniae (strain Taiwan19F-14)).